The primary structure comprises 185 residues: Ribosome-recycling factor (185 aa).

The protein belongs to the RRF family.

It is found in the cytoplasm. Its function is as follows. Responsible for the release of ribosomes from messenger RNA at the termination of protein biosynthesis. May increase the efficiency of translation by recycling ribosomes from one round of translation to another. This Alkalilimnicola ehrlichii (strain ATCC BAA-1101 / DSM 17681 / MLHE-1) protein is Ribosome-recycling factor.